Reading from the N-terminus, the 237-residue chain is Putative N-acetylmannosamine-6-phosphate 2-epimerase (237 aa).

The protein belongs to the NanE family.

The catalysed reaction is an N-acyl-D-glucosamine 6-phosphate = an N-acyl-D-mannosamine 6-phosphate. The protein operates within amino-sugar metabolism; N-acetylneuraminate degradation; D-fructose 6-phosphate from N-acetylneuraminate: step 3/5. Converts N-acetylmannosamine-6-phosphate (ManNAc-6-P) to N-acetylglucosamine-6-phosphate (GlcNAc-6-P). In Listeria monocytogenes serotype 4a (strain HCC23), this protein is Putative N-acetylmannosamine-6-phosphate 2-epimerase.